The following is a 312-amino-acid chain: Peroxidase (312 aa).

An N-terminal signal peptide occupies residues 1 to 23 (MAMGSASCISLVVLVALATAASG). Gln24 carries the post-translational modification Pyrrolidone carboxylic acid. Disulfide bonds link Cys34/Cys107, Cys67/Cys70, Cys113/Cys307, and Cys192/Cys218. His65 acts as the Proton acceptor in catalysis. Ca(2+) is bound by residues Asp66, Gly69, Asp71, and Ser73. Substrate is bound at residue Pro155. His185 is a heme b binding site. Thr186 is a Ca(2+) binding site. The Ca(2+) site is built by Asp231, Thr234, and Asp239. N-linked (GlcNAc...) asparagine glycosylation occurs at Asn262.

Belongs to the peroxidase family. Classical plant (class III) peroxidase subfamily. Ca(2+) serves as cofactor. Heme b is required as a cofactor. As to expression, root.

Its subcellular location is the secreted. It catalyses the reaction 2 a phenolic donor + H2O2 = 2 a phenolic radical donor + 2 H2O. In terms of biological role, removal of H(2)O(2), oxidation of toxic reductants, biosynthesis and degradation of lignin, suberization, auxin catabolism, response to environmental stresses such as wounding, pathogen attack and oxidative stress. These functions might be dependent on each isozyme/isoform in each plant tissue. Its function is as follows. Involved in defense response to powdery meldew fungus. The sequence is that of Peroxidase from Triticum aestivum (Wheat).